Here is a 146-residue protein sequence, read N- to C-terminus: D-aminoacyl-tRNA deacylase (146 aa).

Residues G138–P139 carry the Gly-cisPro motif, important for rejection of L-amino acids motif.

The protein belongs to the DTD family. As to quaternary structure, homodimer.

The protein localises to the cytoplasm. It carries out the reaction glycyl-tRNA(Ala) + H2O = tRNA(Ala) + glycine + H(+). The enzyme catalyses a D-aminoacyl-tRNA + H2O = a tRNA + a D-alpha-amino acid + H(+). In terms of biological role, an aminoacyl-tRNA editing enzyme that deacylates mischarged D-aminoacyl-tRNAs. Also deacylates mischarged glycyl-tRNA(Ala), protecting cells against glycine mischarging by AlaRS. Acts via tRNA-based rather than protein-based catalysis; rejects L-amino acids rather than detecting D-amino acids in the active site. By recycling D-aminoacyl-tRNA to D-amino acids and free tRNA molecules, this enzyme counteracts the toxicity associated with the formation of D-aminoacyl-tRNA entities in vivo and helps enforce protein L-homochirality. The sequence is that of D-aminoacyl-tRNA deacylase from Xanthomonas campestris pv. campestris (strain 8004).